A 619-amino-acid polypeptide reads, in one-letter code: Dihydroxy-acid dehydratase (619 aa).

D81 contributes to the Mg(2+) binding site. C122 contacts [2Fe-2S] cluster. Mg(2+) is bound by residues D123 and K124. An N6-carboxylysine modification is found at K124. Residue C195 participates in [2Fe-2S] cluster binding. E494 is a Mg(2+) binding site. S520 (proton acceptor) is an active-site residue.

This sequence belongs to the IlvD/Edd family. As to quaternary structure, homodimer. Requires [2Fe-2S] cluster as cofactor. Mg(2+) is required as a cofactor.

The catalysed reaction is (2R)-2,3-dihydroxy-3-methylbutanoate = 3-methyl-2-oxobutanoate + H2O. The enzyme catalyses (2R,3R)-2,3-dihydroxy-3-methylpentanoate = (S)-3-methyl-2-oxopentanoate + H2O. It functions in the pathway amino-acid biosynthesis; L-isoleucine biosynthesis; L-isoleucine from 2-oxobutanoate: step 3/4. It participates in amino-acid biosynthesis; L-valine biosynthesis; L-valine from pyruvate: step 3/4. Functionally, functions in the biosynthesis of branched-chain amino acids. Catalyzes the dehydration of (2R,3R)-2,3-dihydroxy-3-methylpentanoate (2,3-dihydroxy-3-methylvalerate) into 2-oxo-3-methylpentanoate (2-oxo-3-methylvalerate) and of (2R)-2,3-dihydroxy-3-methylbutanoate (2,3-dihydroxyisovalerate) into 2-oxo-3-methylbutanoate (2-oxoisovalerate), the penultimate precursor to L-isoleucine and L-valine, respectively. In Shewanella denitrificans (strain OS217 / ATCC BAA-1090 / DSM 15013), this protein is Dihydroxy-acid dehydratase.